The following is a 68-amino-acid chain: MIHVPVNANNSDLAIRSLKKKMQRELVFRSMKMSRFYEPPSVKRVRKKQESERRHRKERAMRRRMMEE.

The tract at residues proline 39–glutamate 68 is disordered. Over residues arginine 54–glutamate 68 the composition is skewed to basic residues.

Belongs to the bacterial ribosomal protein bS21 family.

In Orientia tsutsugamushi (strain Boryong) (Rickettsia tsutsugamushi), this protein is Small ribosomal subunit protein bS21.